Here is a 312-residue protein sequence, read N- to C-terminus: Ribosomal RNA small subunit methyltransferase H (312 aa).

S-adenosyl-L-methionine-binding positions include 34–36 (GGH), Asp54, Phe81, Asp102, and Gln109.

Belongs to the methyltransferase superfamily. RsmH family.

It localises to the cytoplasm. It carries out the reaction cytidine(1402) in 16S rRNA + S-adenosyl-L-methionine = N(4)-methylcytidine(1402) in 16S rRNA + S-adenosyl-L-homocysteine + H(+). Specifically methylates the N4 position of cytidine in position 1402 (C1402) of 16S rRNA. The polypeptide is Ribosomal RNA small subunit methyltransferase H (Geotalea uraniireducens (strain Rf4) (Geobacter uraniireducens)).